The primary structure comprises 398 residues: Acetate kinase (398 aa).

N8 is a binding site for Mg(2+). K15 serves as a coordination point for ATP. R89 is a substrate binding site. The active-site Proton donor/acceptor is D146. ATP contacts are provided by residues 206–210 (HIGNG), 283–285 (DMR), and 331–335 (GMGEN). E383 contributes to the Mg(2+) binding site.

It belongs to the acetokinase family. In terms of assembly, homodimer. It depends on Mg(2+) as a cofactor. Requires Mn(2+) as cofactor.

It localises to the cytoplasm. The enzyme catalyses acetate + ATP = acetyl phosphate + ADP. It participates in metabolic intermediate biosynthesis; acetyl-CoA biosynthesis; acetyl-CoA from acetate: step 1/2. In terms of biological role, catalyzes the formation of acetyl phosphate from acetate and ATP. Can also catalyze the reverse reaction. This Streptococcus pyogenes serotype M28 (strain MGAS6180) protein is Acetate kinase.